A 473-amino-acid polypeptide reads, in one-letter code: Cysteine--tRNA ligase (473 aa).

A Zn(2+)-binding site is contributed by Cys30. Residues 32–42 carry the 'HIGH' region motif; that stretch reads MTVYDYCHIGH. Zn(2+) contacts are provided by Cys213, His238, and Glu242. The 'KMSKS' region motif lies at 270–274; it reads KMSKS. Residue Lys273 coordinates ATP.

It belongs to the class-I aminoacyl-tRNA synthetase family. In terms of assembly, monomer. Zn(2+) is required as a cofactor.

It is found in the cytoplasm. It carries out the reaction tRNA(Cys) + L-cysteine + ATP = L-cysteinyl-tRNA(Cys) + AMP + diphosphate. The chain is Cysteine--tRNA ligase from Acinetobacter baylyi (strain ATCC 33305 / BD413 / ADP1).